The primary structure comprises 153 residues: MKKRAIVAVIVLLLIGLDQLVKSYIVQQIPLGEVRSWIPNFVSLTYLQNRGAAFSILQDQQLLFAVITLVVVIGAIWYLHKHMEDSFWMVLGLTLIIAGGLGNFIDRVSQGFVVDMFHLDFINFAIFNVADSYLTVGVIILLIAMLKEEINGN.

Transmembrane regions (helical) follow at residues 6–26 (IVAV…SYIV), 60–80 (QQLL…WYLH), and 85–105 (DSFW…GNFI). Catalysis depends on residues aspartate 115 and aspartate 131. Residues 124–144 (FAIFNVADSYLTVGVIILLIA) form a helical membrane-spanning segment.

This sequence belongs to the peptidase A8 family.

It localises to the cell membrane. It catalyses the reaction Release of signal peptides from bacterial membrane prolipoproteins. Hydrolyzes -Xaa-Yaa-Zaa-|-(S,diacylglyceryl)Cys-, in which Xaa is hydrophobic (preferably Leu), and Yaa (Ala or Ser) and Zaa (Gly or Ala) have small, neutral side chains.. It participates in protein modification; lipoprotein biosynthesis (signal peptide cleavage). In terms of biological role, this protein specifically catalyzes the removal of signal peptides from prolipoproteins. This chain is Lipoprotein signal peptidase, found in Streptococcus pneumoniae (strain ATCC BAA-255 / R6).